The sequence spans 156 residues: Small ribosomal subunit protein uS7 (156 aa).

The protein belongs to the universal ribosomal protein uS7 family. Part of the 30S ribosomal subunit. Contacts proteins S9 and S11.

Functionally, one of the primary rRNA binding proteins, it binds directly to 16S rRNA where it nucleates assembly of the head domain of the 30S subunit. Is located at the subunit interface close to the decoding center, probably blocks exit of the E-site tRNA. The sequence is that of Small ribosomal subunit protein uS7 from Chlorobaculum parvum (strain DSM 263 / NCIMB 8327) (Chlorobium vibrioforme subsp. thiosulfatophilum).